The chain runs to 655 residues: MGIFSIANQHIRFAVKLATAIVLALFVGFHFQLETPRWAVLTAAIVAAGPAFAAGGEPYSGAIRYRGFLRIIGTFIGCIAGLVIIIAMIHAPLLMILVCCIWAGFCTWISSLVRIENSYAWGLAGYTALIIVITIQPEPLLTPQFAVERCSEIVIGIVCAIMADLLFSPRSIKQEVDRELESLLVAQYQLMQLCIKHGDGEVVDKAWGDLVRRTTALQGMRSNLNMESSRWARANRRLKAINTLSLTLITQSCETYLIQNTRPELITDTFREFFDTPVETAQDVHKQLKRLRRVIAWTGERETPVTIYSWVAAATRYQLLKRGVISNTKINATEEEILQGEPEVKVEPAERHHAMVNFWRTTLSCILGTLFWLWTGWTSGSGAMVMIAVVTSLAMRLPNPRMVAIDFIYGTLAALPLGLLYFLVIIPNTQQSMLLLCISLAVLGFFLGIEVQKRRLGSMGALASTINIIVLDNPMTFHFSQFLDSALGQIVGCVLAFTVILLVRDKSRDRTGRVLLNQFVSAAVSAMTTNVARRKENHLPALYQQLFLLMNKFPGDLPKFRLALTMIIAHQRLRDAPIPVNEDLSAFHRQMRRTADHVISARSDDKRRRYFGQLLEELEIYQEKLRIWQAPPQVTEPVHRLAGMLHKYQHALTDS.

Helical transmembrane passes span 13-33, 38-58, 67-89, 93-112, 121-141, 152-172, 370-390, 407-427, 431-451, 459-479, and 482-502; these read FAVKLATAIVLALFVGFHFQL, WAVLTAAIVAAGPAFAAGGEP, GFLRIIGTFIGCIAGLVIIIAMI, LLMILVCCIWAGFCTWISSL, WGLAGYTALIIVITIQPEPLL, EIVIGIVCAIMADLLFSPRSI, LFWLWTGWTSGSGAMVMIAVV, FIYGTLAALPLGLLYFLVIIP, QSMLLLCISLAVLGFFLGIEV, MGALASTINIIVLDNPMTFHF, and FLDSALGQIVGCVLAFTVILL.

This sequence belongs to the aromatic acid exporter ArAE (TC 2.A.85) family.

The protein resides in the cell inner membrane. Functionally, forms an efflux pump with AaeA. Could function as a metabolic relief valve, allowing to eliminate certain compounds when they accumulate to high levels in the cell. The sequence is that of p-hydroxybenzoic acid efflux pump subunit AaeB from Escherichia coli O9:H4 (strain HS).